The sequence spans 150 residues: Glycine cleavage system H-like protein gcvH2 (150 aa).

One can recognise a Lipoyl-binding domain in the interval 44 to 126 (VATVGLSSFG…PANNWMVKFK (83 aa)).

It belongs to the GcvH family.

The polypeptide is Glycine cleavage system H-like protein gcvH2 (gcvH2) (Dictyostelium discoideum (Social amoeba)).